The sequence spans 287 residues: Inorganic pyrophosphatase (287 aa).

A diphosphate-binding site is contributed by R79. Mg(2+) contacts are provided by D116, D121, and D153.

This sequence belongs to the PPase family. In terms of assembly, homodimer. It depends on Mg(2+) as a cofactor.

Its subcellular location is the cytoplasm. It catalyses the reaction diphosphate + H2O = 2 phosphate + H(+). The polypeptide is Inorganic pyrophosphatase (IPP1) (Kluyveromyces lactis (strain ATCC 8585 / CBS 2359 / DSM 70799 / NBRC 1267 / NRRL Y-1140 / WM37) (Yeast)).